The following is a 159-amino-acid chain: Cytochrome c-type biogenesis protein CcmE (159 aa).

At 1 to 23 the chain is on the cytoplasmic side; the sequence is MSSQSFHNSPSLRVILKQRKKKR. Residues 24-44 form a helical; Signal-anchor for type II membrane protein membrane-spanning segment; sequence LLIVLFCCLIIAIATSLITYA. Topologically, residues 45–159 are periplasmic; that stretch reads LRNTVSFFRM…RLNKHHRVEK (115 aa). Heme-binding residues include His138 and Tyr142.

The protein belongs to the CcmE/CycJ family.

The protein localises to the cell inner membrane. Its function is as follows. Heme chaperone required for the biogenesis of c-type cytochromes. Transiently binds heme delivered by CcmC and transfers the heme to apo-cytochromes in a process facilitated by CcmF and CcmH. The protein is Cytochrome c-type biogenesis protein CcmE of Bartonella henselae (strain ATCC 49882 / DSM 28221 / CCUG 30454 / Houston 1) (Rochalimaea henselae).